We begin with the raw amino-acid sequence, 354 residues long: Methionine import ATP-binding protein MetN (354 aa).

Residues 8 to 250 (LDHIDITFRQ…PKEALTQEFI (243 aa)) enclose the ABC transporter domain. Residue 42 to 49 (GYSGAGKS) coordinates ATP.

It belongs to the ABC transporter superfamily. Methionine importer (TC 3.A.1.24) family. The complex is composed of two ATP-binding proteins (MetN), two transmembrane proteins (MetI) and a solute-binding protein (MetQ).

It localises to the cell membrane. The enzyme catalyses L-methionine(out) + ATP + H2O = L-methionine(in) + ADP + phosphate + H(+). It catalyses the reaction D-methionine(out) + ATP + H2O = D-methionine(in) + ADP + phosphate + H(+). Functionally, part of the ABC transporter complex MetNIQ involved in methionine import. Responsible for energy coupling to the transport system. The polypeptide is Methionine import ATP-binding protein MetN (Streptococcus pyogenes serotype M3 (strain ATCC BAA-595 / MGAS315)).